Reading from the N-terminus, the 502-residue chain is ATP synthase subunit alpha (502 aa).

The interval Val115–Arg139 is disordered. Position 169-176 (Gly169–Thr176) interacts with ATP.

Belongs to the ATPase alpha/beta chains family. In terms of assembly, F-type ATPases have 2 components, CF(1) - the catalytic core - and CF(0) - the membrane proton channel. CF(1) has five subunits: alpha(3), beta(3), gamma(1), delta(1), epsilon(1). CF(0) has three main subunits: a(1), b(2) and c(9-12). The alpha and beta chains form an alternating ring which encloses part of the gamma chain. CF(1) is attached to CF(0) by a central stalk formed by the gamma and epsilon chains, while a peripheral stalk is formed by the delta and b chains.

It localises to the cell membrane. The catalysed reaction is ATP + H2O + 4 H(+)(in) = ADP + phosphate + 5 H(+)(out). In terms of biological role, produces ATP from ADP in the presence of a proton gradient across the membrane. The alpha chain is a regulatory subunit. This chain is ATP synthase subunit alpha, found in Geobacillus thermodenitrificans (strain NG80-2).